The primary structure comprises 122 residues: MIQQESRLKVADNTGAKEILCIRVLGGSGRRYAGIGDVIVATVKDAIPGGNVKRGDVVKAVVVRTAKERRRPDGSYIRFDENAAVLLKSDGEPRGTRIFGPVGRELRDKKFMRIVSLAPEVI.

Belongs to the universal ribosomal protein uL14 family. In terms of assembly, part of the 50S ribosomal subunit. Forms a cluster with proteins L3 and L19. In the 70S ribosome, L14 and L19 interact and together make contacts with the 16S rRNA in bridges B5 and B8.

Its function is as follows. Binds to 23S rRNA. Forms part of two intersubunit bridges in the 70S ribosome. This Beutenbergia cavernae (strain ATCC BAA-8 / DSM 12333 / CCUG 43141 / JCM 11478 / NBRC 16432 / NCIMB 13614 / HKI 0122) protein is Large ribosomal subunit protein uL14.